A 563-amino-acid polypeptide reads, in one-letter code: Tripeptidyl-peptidase 1 (563 aa).

Residues 1-19 form the signal peptide; it reads MGLQACLLGLFALILSGKC. The propeptide at 20–195 is removed in mature form; that stretch reads SYSPEPDQRR…PEPQVTGTVG (176 aa). Cys-111 and Cys-122 form a disulfide bridge. In terms of domain architecture, Peptidase S53 spans 199-563; it reads GVTPSVIRKR…PALLKTLLNP (365 aa). N-linked (GlcNAc...) asparagine glycans are attached at residues Asn-210 and Asn-222. Active-site charge relay system residues include Glu-272 and Asp-276. N-linked (GlcNAc...) asparagine glycans are attached at residues Asn-286, Asn-313, and Asn-443. 2 disulfides stabilise this stretch: Cys-365/Cys-526 and Cys-522/Cys-537. Ser-475 functions as the Charge relay system in the catalytic mechanism. Asp-517 and Val-518 together coordinate Ca(2+). Residues Gly-539, Gly-541, and Asp-543 each coordinate Ca(2+).

Monomer. Interacts with CLN5. Interacts with CLN3. Ca(2+) serves as cofactor. In terms of processing, activated by autocatalytic proteolytical processing upon acidification. N-glycosylation is required for processing and activity.

Its subcellular location is the lysosome. The protein resides in the melanosome. The enzyme catalyses Release of an N-terminal tripeptide from a polypeptide, but also has endopeptidase activity.. Its function is as follows. Lysosomal serine protease with tripeptidyl-peptidase I activity. May act as a non-specific lysosomal peptidase which generates tripeptides from the breakdown products produced by lysosomal proteinases. Requires substrates with an unsubstituted N-terminus. The sequence is that of Tripeptidyl-peptidase 1 (TPP1) from Pan troglodytes (Chimpanzee).